The primary structure comprises 46 residues: Esculentin-1SEb (46 aa).

A disulfide bridge links Cys-40 with Cys-46.

Expressed by the skin glands.

The protein localises to the secreted. Mast cell degranulating peptide. Causes histamine release from rat peritoneal mast cells in vitro. Has antibacterial activity against the Gram-negative bacterium E.coli K12 and Gram-positive bacterium M.luteus NCT C2665. The chain is Esculentin-1SEb from Lithobates sevosus (Dusky gopher frog).